Reading from the N-terminus, the 187-residue chain is Ribosome-recycling factor (187 aa).

This sequence belongs to the RRF family.

Its subcellular location is the cytoplasm. Its function is as follows. Responsible for the release of ribosomes from messenger RNA at the termination of protein biosynthesis. May increase the efficiency of translation by recycling ribosomes from one round of translation to another. In Nitrosococcus oceani (strain ATCC 19707 / BCRC 17464 / JCM 30415 / NCIMB 11848 / C-107), this protein is Ribosome-recycling factor.